We begin with the raw amino-acid sequence, 875 residues long: Neurotrypsin (875 aa).

The first 20 residues, 1-20 (MTLARFVLALMLGALPEVVG), serve as a signal peptide directing secretion. Residue Asn-26 is glycosylated (N-linked (GlcNAc...) asparagine). Residues 29-88 (LHHSHRHSPPPGPHYPYYLPTQQRPPRTRPPPPLPRFPRPPRALPAQRPHALQAGHTPRP) are disordered. Residues 43-53 (YPYYLPTQQRP) show a composition bias toward low complexity. Positions 56–71 (TRPPPPLPRFPRPPRA) are enriched in pro residues. Positions 93 to 165 (CPAGEPWVSV…GKVDWGYCDC (73 aa)) constitute a Kringle domain. 20 disulfide bridges follow: Cys-93/Cys-165, Cys-109/Cys-149, Cys-138/Cys-163, Cys-195/Cys-259, Cys-208/Cys-269, Cys-239/Cys-249, Cys-305/Cys-369, Cys-318/Cys-379, Cys-349/Cys-359, Cys-412/Cys-475, Cys-425/Cys-485, Cys-455/Cys-465, Cys-525/Cys-589, Cys-538/Cys-599, Cys-569/Cys-579, Cys-619/Cys-750, Cys-661/Cys-677, Cys-765/Cys-831, Cys-794/Cys-808, and Cys-821/Cys-850. SRCR domains follow at residues 170 to 271 (VRLR…TCSF), 280 to 381 (IRLA…SCTP), 387 to 487 (IRLA…ACYP), and 500 to 601 (VRLV…ICDY). The segment at 619-630 (CGLRLLHRRQKR) is zymogen activation region. The Peptidase S1 domain occupies 631–874 (IIGGKNSLRG…FVPWIKSVTK (244 aa)). His-676 serves as the catalytic Charge relay system. A glycan (N-linked (GlcNAc...) asparagine) is linked at Asn-683. Residue Asp-726 is the Charge relay system of the active site. The active-site Charge relay system is Ser-825.

It belongs to the peptidase S1 family.

Its subcellular location is the secreted. Its function is as follows. Plays a role in neuronal plasticity and the proteolytic action may subserve structural reorganizations associated with learning and memory operations. The sequence is that of Neurotrypsin (PRSS12) from Pan troglodytes (Chimpanzee).